We begin with the raw amino-acid sequence, 438 residues long: Putative F-box/FBD/LRR-repeat protein At2g05300 (438 aa).

The F-box domain maps to 13-59 (EDRISQLPDPLLTQILNLLPTEEAVKTSVLSTRWRTLWLWVPNLELS). LRR repeat units follow at residues 135-166 (CDSL…RLKD), 167-192 (IVFH…KIDV), 235-261 (CLII…DISL), and 318-346 (YVTL…ILER). Residues 362–409 (SMSSVPECLLTSLEFVEFKAPICGLGPEMMLVWYFLKNSPTLKKLTLP) form the FBD domain.

The chain is Putative F-box/FBD/LRR-repeat protein At2g05300 from Arabidopsis thaliana (Mouse-ear cress).